Reading from the N-terminus, the 235-residue chain is Probable membrane-associated kinase regulator 6 (235 aa).

A disordered region spans residues 108-140 (SAATEEESEPLDTTTSEKIDTRGLNSKPSPTSS). Polar residues predominate over residues 130–140 (GLNSKPSPTSS).

It localises to the cell membrane. Its function is as follows. May be involved in abscisic acid signaling by acting as a kinase regulator. This chain is Probable membrane-associated kinase regulator 6 (MAKR6), found in Arabidopsis thaliana (Mouse-ear cress).